Consider the following 407-residue polypeptide: Tryptophan synthase beta chain (407 aa).

N6-(pyridoxal phosphate)lysine is present on K91.

This sequence belongs to the TrpB family. In terms of assembly, tetramer of two alpha and two beta chains. Pyridoxal 5'-phosphate serves as cofactor.

The enzyme catalyses (1S,2R)-1-C-(indol-3-yl)glycerol 3-phosphate + L-serine = D-glyceraldehyde 3-phosphate + L-tryptophan + H2O. It participates in amino-acid biosynthesis; L-tryptophan biosynthesis; L-tryptophan from chorismate: step 5/5. Its function is as follows. The beta subunit is responsible for the synthesis of L-tryptophan from indole and L-serine. The chain is Tryptophan synthase beta chain from Streptococcus pneumoniae (strain Taiwan19F-14).